The sequence spans 216 residues: Potassium-transporting ATPase KdpC subunit (216 aa).

A helical transmembrane segment spans residues 12 to 32; it reads LLGVSLLVFGLLYQGSLMAIG. Polar residues predominate over residues 197 to 207; it reads QNETDQNSDMN. A disordered region spans residues 197-216; the sequence is QNETDQNSDMNASEIANGDH.

It belongs to the KdpC family. As to quaternary structure, the system is composed of three essential subunits: KdpA, KdpB and KdpC. The complex also contains KdpF, a small non-essential subunit.

The protein localises to the cell membrane. Part of the high-affinity ATP-driven potassium transport (or Kdp) system, which catalyzes the hydrolysis of ATP coupled with the electrogenic transport of potassium into the cytoplasm. This subunit acts as a catalytic chaperone that increases the ATP-binding affinity of the ATP-hydrolyzing subunit KdpB by the formation of a transient KdpB/KdpC/ATP ternary complex. The Kdp system is essential for growth under K(+) limitation, and for survival under desiccation and salt crystal inclusion. This chain is Potassium-transporting ATPase KdpC subunit, found in Halobacterium salinarum (strain ATCC 29341 / DSM 671 / R1).